The sequence spans 121 residues: Large ribosomal subunit protein bL20 (121 aa).

Belongs to the bacterial ribosomal protein bL20 family.

Its function is as follows. Binds directly to 23S ribosomal RNA and is necessary for the in vitro assembly process of the 50S ribosomal subunit. It is not involved in the protein synthesizing functions of that subunit. The chain is Large ribosomal subunit protein bL20 from Wolbachia pipientis subsp. Culex pipiens (strain wPip).